The chain runs to 81 residues: MNRLMILVFAAVILALASADDVDIAKRGVPCLCVSDGPRPRGNNLSGTIWMKTGGYGGNGCPKGWHFCGKSRGLLSDCCKQ.

A signal peptide spans 1 to 19 (MNRLMILVFAAVILALASA). Residues 20 to 25 (DDVDIA) constitute a propeptide that is removed on maturation. Intrachain disulfides connect Cys31-Cys78, Cys33-Cys68, and Cys61-Cys79.

It belongs to the sea anemone sodium channel inhibitory toxin family. Type I subfamily.

Its subcellular location is the secreted. The protein localises to the nematocyst. Binds specifically to voltage-gated sodium channels (Nav), thereby delaying their inactivation during signal transduction. Causes death to crabs. The protein is Delta-actitoxin-Aeq2d of Actinia equina (Beadlet anemone).